The following is a 645-amino-acid chain: Chlorophyllide a oxygenase, chloroplastic (645 aa).

Residues 1 to 46 form a disordered region; the sequence is MLPASLQRKAAAVGGRGPTNQSRVAVRVSAQPKEAPPASTPIVEDP. A coiled-coil region spans residues 105-218; the sequence is QARQKLEYLR…RKASDLDIKE (114 aa). The disordered stretch occupies residues 258 to 287; that stretch reads ATTVTQEVPSTSYGTPVDRAPRRSKAAIRR. Polar residues predominate over residues 259-271; the sequence is TTVTQEVPSTSYG. Residues 305–406 form the Rieske domain; sequence WYPAEFSARL…CAEKDGFIWV (102 aa). Residues Cys346, His348, Cys365, and His368 each contribute to the [2Fe-2S] cluster site. Positions 446, 450, 453, and 458 each coordinate Fe cation.

The protein resides in the plastid. It localises to the chloroplast inner membrane. Its subcellular location is the chloroplast thylakoid membrane. It catalyses the reaction chlorophyllide a + 2 NADPH + 2 O2 + 2 H(+) = chlorophyllide b + 2 NADP(+) + 3 H2O. Functionally, catalyzes a two-step oxygenase reaction involved in the synthesis of chlorophyll b. Acts specifically on the non-esterified chlorophyllide a and not on chlorophyll a. The sequence is that of Chlorophyllide a oxygenase, chloroplastic (CAO) from Chlamydomonas reinhardtii (Chlamydomonas smithii).